Consider the following 2197-residue polypeptide: Protein Ycf2 (2197 aa).

1539-1546 (GSIGTGRS) serves as a coordination point for ATP.

It belongs to the Ycf2 family.

The protein resides in the plastid. It localises to the chloroplast stroma. Functionally, probable ATPase of unknown function. Its presence in a non-photosynthetic plant (Epifagus virginiana) and experiments in tobacco indicate that it has an essential function which is probably not related to photosynthesis. The polypeptide is Protein Ycf2 (Ipomoea purpurea (Common morning glory)).